The primary structure comprises 701 residues: Elongation factor G (701 aa).

The tr-type G domain occupies 8 to 291; that stretch reads GRYRNIGIVA…AVIDYLPAPT (284 aa). GTP-binding positions include 17–24, 89–93, and 143–146; these read AHVDAGKT, DTPGH, and NKMD.

It belongs to the TRAFAC class translation factor GTPase superfamily. Classic translation factor GTPase family. EF-G/EF-2 subfamily.

It is found in the cytoplasm. In terms of biological role, catalyzes the GTP-dependent ribosomal translocation step during translation elongation. During this step, the ribosome changes from the pre-translocational (PRE) to the post-translocational (POST) state as the newly formed A-site-bound peptidyl-tRNA and P-site-bound deacylated tRNA move to the P and E sites, respectively. Catalyzes the coordinated movement of the two tRNA molecules, the mRNA and conformational changes in the ribosome. The protein is Elongation factor G of Pseudomonas syringae pv. syringae (strain B728a).